A 701-amino-acid chain; its full sequence is Glycine--tRNA ligase beta subunit (701 aa).

The protein belongs to the class-II aminoacyl-tRNA synthetase family. As to quaternary structure, tetramer of two alpha and two beta subunits.

It localises to the cytoplasm. It carries out the reaction tRNA(Gly) + glycine + ATP = glycyl-tRNA(Gly) + AMP + diphosphate. The sequence is that of Glycine--tRNA ligase beta subunit from Helicobacter pylori (strain HPAG1).